Consider the following 303-residue polypeptide: Small ribosomal subunit protein bS1m (303 aa).

Serine 2 carries the N-acetylserine modification. Residues 2 to 13 constitute a mitochondrion; not cleaved transit peptide; it reads SFAQILRGSRAM.

It belongs to the bacterial ribosomal protein bS1 family. Component of the mitochondrial small ribosomal subunit (mt-SSU). Mature yeast 74S mitochondrial ribosomes consist of a small (37S) and a large (54S) subunit. The 37S small subunit contains a 15S ribosomal RNA (15S mt-rRNA) and at least 32 different proteins. The 54S large subunit contains a 21S rRNA (21S mt-rRNA) and at least 45 different proteins. This subunit is mutually exclusive with mug178/small ribosomal subunit protein L51-b.

It localises to the mitochondrion. In terms of biological role, component of the mitochondrial ribosome (mitoribosome), a dedicated translation machinery responsible for the synthesis of mitochondrial genome-encoded proteins, including at least some of the essential transmembrane subunits of the mitochondrial respiratory chain. The mitoribosomes are attached to the mitochondrial inner membrane and translation products are cotranslationally integrated into the membrane. bS1m functionally interacts with the 5'-UTR of mitochondrial mRNAs. Plays an essential role in mitochondrial translation. This is Small ribosomal subunit protein bS1m (mrp51) from Schizosaccharomyces pombe (strain 972 / ATCC 24843) (Fission yeast).